The sequence spans 61 residues: Small ribosomal subunit protein uS14 (61 aa).

Cys-24, Cys-27, Cys-40, and Cys-43 together coordinate Zn(2+).

It belongs to the universal ribosomal protein uS14 family. Zinc-binding uS14 subfamily. In terms of assembly, part of the 30S ribosomal subunit. Contacts proteins S3 and S10. Requires Zn(2+) as cofactor.

Its function is as follows. Binds 16S rRNA, required for the assembly of 30S particles and may also be responsible for determining the conformation of the 16S rRNA at the A site. In Mycoplasmopsis agalactiae (strain NCTC 10123 / CIP 59.7 / PG2) (Mycoplasma agalactiae), this protein is Small ribosomal subunit protein uS14.